Consider the following 283-residue polypeptide: Pantoate--beta-alanine ligase (283 aa).

Belongs to the pantothenate synthetase family.

The enzyme catalyses (R)-pantoate + beta-alanine + ATP = (R)-pantothenate + AMP + diphosphate + H(+). It functions in the pathway cofactor biosynthesis; (R)-pantothenate biosynthesis; (R)-pantothenate from (R)-pantoate and beta-alanine: step 1/1. The sequence is that of Pantoate--beta-alanine ligase (pan6) from Schizosaccharomyces pombe (strain 972 / ATCC 24843) (Fission yeast).